A 207-amino-acid polypeptide reads, in one-letter code: Large ribosomal subunit protein uL3 (207 aa).

Residues 113–148 (KGKGFQGPIKRHGQSRGPMAHGSRYHRRPGSMGPVA) form a disordered region.

Belongs to the universal ribosomal protein uL3 family. In terms of assembly, part of the 50S ribosomal subunit. Forms a cluster with proteins L14 and L19.

Its function is as follows. One of the primary rRNA binding proteins, it binds directly near the 3'-end of the 23S rRNA, where it nucleates assembly of the 50S subunit. This Lactococcus lactis subsp. lactis (strain IL1403) (Streptococcus lactis) protein is Large ribosomal subunit protein uL3.